Reading from the N-terminus, the 93-residue chain is Small ribosomal subunit protein uS19 (93 aa).

It belongs to the universal ribosomal protein uS19 family.

In terms of biological role, protein S19 forms a complex with S13 that binds strongly to the 16S ribosomal RNA. This chain is Small ribosomal subunit protein uS19, found in Citrifermentans bemidjiense (strain ATCC BAA-1014 / DSM 16622 / JCM 12645 / Bem) (Geobacter bemidjiensis).